The chain runs to 369 residues: uncharacterized protein (369 aa).

The protein to A.pernix APE1276 and APE1804.

This is an uncharacterized protein from Saccharolobus solfataricus (strain ATCC 35092 / DSM 1617 / JCM 11322 / P2) (Sulfolobus solfataricus).